The following is a 234-amino-acid chain: Leucyl/phenylalanyl-tRNA--protein transferase (234 aa).

The protein belongs to the L/F-transferase family.

The protein localises to the cytoplasm. The enzyme catalyses N-terminal L-lysyl-[protein] + L-leucyl-tRNA(Leu) = N-terminal L-leucyl-L-lysyl-[protein] + tRNA(Leu) + H(+). It catalyses the reaction N-terminal L-arginyl-[protein] + L-leucyl-tRNA(Leu) = N-terminal L-leucyl-L-arginyl-[protein] + tRNA(Leu) + H(+). The catalysed reaction is L-phenylalanyl-tRNA(Phe) + an N-terminal L-alpha-aminoacyl-[protein] = an N-terminal L-phenylalanyl-L-alpha-aminoacyl-[protein] + tRNA(Phe). Its function is as follows. Functions in the N-end rule pathway of protein degradation where it conjugates Leu, Phe and, less efficiently, Met from aminoacyl-tRNAs to the N-termini of proteins containing an N-terminal arginine or lysine. This is Leucyl/phenylalanyl-tRNA--protein transferase from Nitratidesulfovibrio vulgaris (strain ATCC 29579 / DSM 644 / CCUG 34227 / NCIMB 8303 / VKM B-1760 / Hildenborough) (Desulfovibrio vulgaris).